The sequence spans 63 residues: MARYRRHSRSRSRSRYRRRRRRRSRHHNRRRTYRRSRRHSRRRRGRRRGYSRRRYSRRGRRRY.

Residues methionine 1–tyrosine 63 are disordered.

The protein belongs to the protamine P1 family. As to expression, testis.

The protein resides in the nucleus. The protein localises to the chromosome. In terms of biological role, protamines substitute for histones in the chromatin of sperm during the haploid phase of spermatogenesis. They compact sperm DNA into a highly condensed, stable and inactive complex. The polypeptide is Sperm protamine P1 (PRM1) (Phascogale tapoatafa (Common wambenger)).